The chain runs to 342 residues: Cellular tumor antigen p53 (342 aa).

The transcription activation (acidic) stretch occupies residues 1 to 35 (MEEADLTLPLSQDTFHDLWNNVFLSTENESLPPPE). Residues 68–255 (NYAGEHGFNL…KTEEGNLEKS (188 aa)) mediate DNA binding. The Zn(2+) site is built by Cys-142, His-145, Cys-201, and Cys-205. Residues 236–243 (RVCACPGR) form an interaction with DNA region. Over residues 244-256 (DRKTEEGNLEKSG) the composition is skewed to basic and acidic residues. The segment at 244 to 287 (DRKTEEGNLEKSGTKQTKKRKSAPAPDTSTAKKSKSASSGEDED) is disordered. The short motif at 261–278 (KKRKSAPAPDTSTAKKSK) is the Bipartite nuclear localization signal element. Residues 271-282 (TSTAKKSKSASS) show a composition bias toward low complexity. An oligomerization region spans residues 288 to 317 (KEIYTLSIRGRNRYLWFKSLNDGLELMDKT). Residues 302–313 (LWFKSLNDGLEL) carry the Nuclear export signal motif. The segment at 318 to 342 (GPKIKQEIPAPSSGKRLLKGGSDSD) is disordered. Residues 319–336 (PKIKQEIPAPSSGKRLLK) are basic (repression of DNA-binding).

The protein belongs to the p53 family. As to quaternary structure, binds DNA as a homotetramer. Requires Zn(2+) as cofactor.

The protein localises to the cytoplasm. The protein resides in the nucleus. Multifunctional transcription factor that induces cell cycle arrest, DNA repair or apoptosis upon binding to its target DNA sequence. Acts as a tumor suppressor in many tumor types; induces growth arrest or apoptosis depending on the physiological circumstances and cell type. Negatively regulates cell division by controlling expression of a set of genes required for this process. One of the activated genes is an inhibitor of cyclin-dependent kinases. Apoptosis induction seems to be mediated either by stimulation of BAX and FAS antigen expression, or by repression of Bcl-2 expression. The chain is Cellular tumor antigen p53 (tp53) from Xiphophorus maculatus (Southern platyfish).